Consider the following 320-residue polypeptide: UPF0053 protein in cps region (320 aa).

Residues 4–24 (CLSFLLMIGFSLIAEGFSFII) traverse the membrane as a helical segment. 2 CBS domains span residues 121 to 183 (MTSR…PLDL) and 186 to 244 (LVRQ…PNEV).

This sequence belongs to the UPF0053 family.

It localises to the cell membrane. This is UPF0053 protein in cps region from Klebsiella pneumoniae.